We begin with the raw amino-acid sequence, 326 residues long: Probable cell division protein WhiA (326 aa).

A DNA-binding region (H-T-H motif) is located at residues 275–308 (SLEELGQLADPPLTKDAIAGRIRRLLAMADKRAA).

This sequence belongs to the WhiA family.

Its function is as follows. Involved in cell division and chromosome segregation. This is Probable cell division protein WhiA from Thermobifida fusca (strain YX).